We begin with the raw amino-acid sequence, 169 residues long: Cell division inhibitor SulA (169 aa).

Positions 106–112 (ALRTGNY) are ftsZ binding. Residues 162–169 (KIHSNLYH) form a lon protease binding region.

Belongs to the SulA family. Interacts with FtsZ. Is rapidly cleaved and degraded by the Lon protease once DNA damage is repaired.

Component of the SOS system and an inhibitor of cell division. Accumulation of SulA causes rapid cessation of cell division and the appearance of long, non-septate filaments. In the presence of GTP, binds a polymerization-competent form of FtsZ in a 1:1 ratio, thus inhibiting FtsZ polymerization and therefore preventing it from participating in the assembly of the Z ring. This mechanism prevents the premature segregation of damaged DNA to daughter cells during cell division. This is Cell division inhibitor SulA from Shigella boydii serotype 18 (strain CDC 3083-94 / BS512).